Reading from the N-terminus, the 140-residue chain is uncharacterized protein (140 aa).

In terms of domain architecture, HTH cro/C1-type spans 26–80 (IRSQRETAHVSMRQLAERSGVSNPYLSQVERGLRKPSADVLSQIAKALRVSAEVL). Positions 37-56 (MRQLAERSGVSNPYLSQVER) form a DNA-binding region, H-T-H motif.

This is an uncharacterized protein from Mycobacterium tuberculosis (strain ATCC 25618 / H37Rv).